The primary structure comprises 300 residues: Cation-efflux pump FieF (300 aa).

A run of 4 helical transmembrane segments spans residues alanine 12–tryptophan 32, isoleucine 39–valine 59, alanine 82–isoleucine 102, and proline 114–phenylalanine 134. 2 residues coordinate Zn(2+): aspartate 45 and aspartate 49. Residues histidine 153 and aspartate 157 each coordinate Zn(2+). Transmembrane regions (helical) follow at residues serine 156 to histidine 176 and alanine 178 to glycine 198.

Belongs to the cation diffusion facilitator (CDF) transporter (TC 2.A.4) family. FieF subfamily. In terms of assembly, homodimer.

The protein resides in the cell inner membrane. It catalyses the reaction Zn(2+)(in) + H(+)(out) = Zn(2+)(out) + H(+)(in). The catalysed reaction is Cd(2+)(in) + H(+)(out) = Cd(2+)(out) + H(+)(in). The enzyme catalyses Fe(2+)(in) + H(+)(out) = Fe(2+)(out) + H(+)(in). Functionally, divalent metal cation transporter which exports Zn(2+), Cd(2+) and possibly Fe(2+). May be involved in zinc and iron detoxification by efflux. The protein is Cation-efflux pump FieF of Escherichia coli O157:H7 (strain EC4115 / EHEC).